The chain runs to 277 residues: 3-methyl-2-oxobutanoate hydroxymethyltransferase (277 aa).

The Mg(2+) site is built by Asp43 and Asp82. Residues 43 to 44 (DS), Asp82, and Lys112 contribute to the 3-methyl-2-oxobutanoate site. Position 114 (Glu114) interacts with Mg(2+). Glu181 serves as the catalytic Proton acceptor.

This sequence belongs to the PanB family. As to quaternary structure, homodecamer; pentamer of dimers. Requires Mg(2+) as cofactor.

It is found in the cytoplasm. The catalysed reaction is 3-methyl-2-oxobutanoate + (6R)-5,10-methylene-5,6,7,8-tetrahydrofolate + H2O = 2-dehydropantoate + (6S)-5,6,7,8-tetrahydrofolate. Its pathway is cofactor biosynthesis; (R)-pantothenate biosynthesis; (R)-pantoate from 3-methyl-2-oxobutanoate: step 1/2. Catalyzes the reversible reaction in which hydroxymethyl group from 5,10-methylenetetrahydrofolate is transferred onto alpha-ketoisovalerate to form ketopantoate. This is 3-methyl-2-oxobutanoate hydroxymethyltransferase from Listeria monocytogenes serovar 1/2a (strain ATCC BAA-679 / EGD-e).